A 227-amino-acid chain; its full sequence is Translation initiation factor 6 (227 aa).

The protein belongs to the eIF-6 family.

In terms of biological role, binds to the 50S ribosomal subunit and prevents its association with the 30S ribosomal subunit to form the 70S initiation complex. This is Translation initiation factor 6 from Staphylothermus marinus (strain ATCC 43588 / DSM 3639 / JCM 9404 / F1).